A 543-amino-acid chain; its full sequence is Protein phosphatase 1G (543 aa).

The N-myristoyl glycine moiety is linked to residue glycine 2. Residue arginine 22 is modified to Omega-N-methylarginine. The 478-residue stretch at 26–503 (PYGFSAMQGW…DNMTCIIICF (478 aa)) folds into the PPM-type phosphatase domain. Residues aspartate 60 and glycine 61 each contribute to the Mn(2+) site. Disordered regions lie at residues 116 to 139 (QIAG…DVDN) and 163 to 326 (NCHK…SDSG). A Phosphothreonine modification is found at threonine 122. Over residues 123 to 139 (EDEDEKEKVADEDDVDN) the composition is skewed to acidic residues. Serine 183 is modified (phosphoserine). Over residues 259–310 (DSEDESDEAEEEEEDSEECSEEEDGYSSEEAENEEDEDDTEEAEEDDEEEEM) the composition is skewed to acidic residues. Lysine 381 carries the post-translational modification N6-acetyllysine. Aspartate 439 and aspartate 494 together coordinate Mn(2+). The segment at 508-543 (TAAPQPESGKRKLEEVLSTEGAEENGNSDKKKAKRD) is disordered. A Phosphoserine modification is found at serine 525.

Belongs to the PP2C family. Interacts with NOL3; may dephosphorylate NOL3. Requires Mg(2+) as cofactor. It depends on Mn(2+) as a cofactor.

It is found in the cytoplasm. The protein localises to the membrane. The enzyme catalyses O-phospho-L-seryl-[protein] + H2O = L-seryl-[protein] + phosphate. It catalyses the reaction O-phospho-L-threonyl-[protein] + H2O = L-threonyl-[protein] + phosphate. The protein is Protein phosphatase 1G (PPM1G) of Bos taurus (Bovine).